The primary structure comprises 106 residues: L-rhamnose mutarotase (106 aa).

Tyr20 provides a ligand contact to substrate. His24 serves as the catalytic Proton donor. Substrate is bound by residues Tyr43 and 78-79 (WW).

This sequence belongs to the rhamnose mutarotase family. Homodimer.

Its subcellular location is the cytoplasm. The catalysed reaction is alpha-L-rhamnose = beta-L-rhamnose. It participates in carbohydrate degradation; L-rhamnose degradation. Involved in the anomeric conversion of L-rhamnose. The polypeptide is L-rhamnose mutarotase (rhaM) (Rhizobium leguminosarum bv. trifolii).